We begin with the raw amino-acid sequence, 241 residues long: Dephospho-CoA kinase CAB5 (241 aa).

Residues 3-211 enclose the DPCK domain; that stretch reads VVGLTGGIAC…PSKLRTVLEY (209 aa). 8–15 contacts ATP; that stretch reads GGIACGKS.

It belongs to the CoaE family.

It localises to the endoplasmic reticulum. It is found in the mitochondrion. The protein resides in the nucleus. It catalyses the reaction 3'-dephospho-CoA + ATP = ADP + CoA + H(+). It participates in cofactor biosynthesis; coenzyme A biosynthesis; CoA from (R)-pantothenate: step 5/5. In terms of biological role, catalyzes the phosphorylation of the 3'-hydroxyl group of dephosphocoenzyme A to form coenzyme A. This is Dephospho-CoA kinase CAB5 (CAB5) from Saccharomyces cerevisiae (strain ATCC 204508 / S288c) (Baker's yeast).